A 338-amino-acid polypeptide reads, in one-letter code: Mas-related G-protein coupled receptor member B2 (338 aa).

At 1–40 (MSGDFLIKNLSTSAWKTNITVLNGSYYIDTSVCVTRNQAM) the chain is on the extracellular side. Residues Asn9, Asn18, and Asn23 are each glycosylated (N-linked (GlcNAc...) asparagine). A helical transmembrane segment spans residues 41–61 (ILLSIIISLVGMGLNAIVLWF). Over 62 to 89 (LGIRMHTNAFTVYILNLAMADFLYLCSQ) the chain is Cytoplasmic. Residues 90–110 (FVICLLIAFYIFYSIDINIPL) traverse the membrane as a helical segment. Residue Val111 is a topological domain, extracellular. Residues 112 to 132 (LYVVPIFAYLSGLSILSTISI) traverse the membrane as a helical segment. Residues 133–157 (ERCLSVIWPIWYRCKRPRHTSAITC) lie on the Cytoplasmic side of the membrane. A helical membrane pass occupies residues 158–178 (FVLWVMSLLLGLLEGKACGLL). The Extracellular portion of the chain corresponds to 179–191 (FNSFDSYWCETFD). Residues 192–212 (VITNIWSVVFFGVLCGSSLTL) form a helical membrane-spanning segment. Residues 213-231 (LVRIFCGSQRIPMTRLYVT) lie on the Cytoplasmic side of the membrane. The chain crosses the membrane as a helical span at residues 232-252 (ITLTVLVFLIFGLPFGIYWIL). The Extracellular segment spans residues 253–268 (YQWISNFYYVEICNFY). A helical membrane pass occupies residues 269 to 289 (LEILFLSCVNSCMNPIIYFLV). Over 290–338 (GSIRHRRFRRKTLKLLLQRAMQDTPEEEQSGNKSSSEHPEELETVQSCS) the chain is Cytoplasmic. A disordered region spans residues 310–338 (MQDTPEEEQSGNKSSSEHPEELETVQSCS).

It belongs to the G-protein coupled receptor 1 family. Mas subfamily. Mast cell-specific.

The protein resides in the cell membrane. In terms of biological role, mast cell-specific receptor for basic secretagogues, i.e. cationic amphiphilic drugs, as well as endo- or exogenous peptides, consisting of a basic head group and a hydrophobic core. Recognizes and binds small molecules containing a cyclized tetrahydroisoquinoline (THIQ), such as non-steroidal neuromuscular blocking drugs (NMBDs), including tubocurarine and atracurium. In response to these compounds, mediates pseudo-allergic reactions characterized by histamine release, inflammation and airway contraction. This Mus musculus (Mouse) protein is Mas-related G-protein coupled receptor member B2 (Mrgprb2).